The following is a 386-amino-acid chain: MIRGERVIGILAAGGSGQRAGVAKQWLVLGGESVLRRSARVLAACDAVDGLVVVVPPGDEARGEAELAGLGKPVRAVAGGPARADSVRNGLAAADGAVVLVHDAARPFASAALAGRVAEAAARDGAALAALPATDTVKRAEAGAEVPRVLETLDRRTVWLAQTPQGFRRAVLEQAYAAAGPSASAATDECALVEAAGAPVTLVPGEPGNFKITGPDDVRRARALLEAPVATGVGYDTHRFAPGRRLVLGGVEFEGDGLLGHSDADVCAHAIGDAILGAAGLGDLGRHFPDTDPRWKGVSSLALLREIAAKAAERGWRVGNCDVTLAAKRPKIAPRAEEMRARLAGALGISPAQVNVKATTGEGMGFVGREEGVAAHAIALLVRAAG.

The 2-C-methyl-D-erythritol 4-phosphate cytidylyltransferase stretch occupies residues 1–229 (MIRGERVIGI…RARALLEAPV (229 aa)). Residues 230 to 386 (ATGVGYDTHR…AIALLVRAAG (157 aa)) are 2-C-methyl-D-erythritol 2,4-cyclodiphosphate synthase. Asp236 and His238 together coordinate a divalent metal cation. 4-CDP-2-C-methyl-D-erythritol 2-phosphate-binding positions include 236–238 (DTH) and 261–262 (HS). His269 serves as a coordination point for a divalent metal cation. Residues 283–285 (DLG), 288–292 (FPDTD), 359–362 (TTGE), Phe366, and Arg369 each bind 4-CDP-2-C-methyl-D-erythritol 2-phosphate.

This sequence in the N-terminal section; belongs to the IspD/TarI cytidylyltransferase family. IspD subfamily. It in the C-terminal section; belongs to the IspF family. A divalent metal cation is required as a cofactor.

The enzyme catalyses 2-C-methyl-D-erythritol 4-phosphate + CTP + H(+) = 4-CDP-2-C-methyl-D-erythritol + diphosphate. It catalyses the reaction 4-CDP-2-C-methyl-D-erythritol 2-phosphate = 2-C-methyl-D-erythritol 2,4-cyclic diphosphate + CMP. The protein operates within isoprenoid biosynthesis; isopentenyl diphosphate biosynthesis via DXP pathway; isopentenyl diphosphate from 1-deoxy-D-xylulose 5-phosphate: step 2/6. Its pathway is isoprenoid biosynthesis; isopentenyl diphosphate biosynthesis via DXP pathway; isopentenyl diphosphate from 1-deoxy-D-xylulose 5-phosphate: step 4/6. Bifunctional enzyme that catalyzes the formation of 4-diphosphocytidyl-2-C-methyl-D-erythritol from CTP and 2-C-methyl-D-erythritol 4-phosphate (MEP) (IspD), and catalyzes the conversion of 4-diphosphocytidyl-2-C-methyl-D-erythritol 2-phosphate (CDP-ME2P) to 2-C-methyl-D-erythritol 2,4-cyclodiphosphate (ME-CPP) with a corresponding release of cytidine 5-monophosphate (CMP) (IspF). This is Bifunctional enzyme IspD/IspF from Anaeromyxobacter dehalogenans (strain 2CP-C).